The following is an 87-amino-acid chain: MELKNSISDYTEAEFVQLLKEIEKENVAATDDVLDVLLEHFVKITEHPDGTDLIYYPSDNRDDSPEGIVKEIKEWRAANGKPGFKQG.

It belongs to the colicins ColE2/ColE8/ColE9 and pyocins S1/S2 family.

In terms of biological role, this protein is able to protect a cell, which harbors the plasmid ColE7 encoding colicin E7, against colicin E7, it binds specifically to the DNase-type colicin and inhibits its bactericidal activity. Dimeric ImmE7 may possess a RNase activity that cleaves its own mRNA at a specific site and thus autoregulates translational expression of the downstream ceiE7 gene as well as degradation of the upstream ceaE7 mRNA. This Escherichia coli protein is Colicin-E7 immunity protein (imm).